A 357-amino-acid chain; its full sequence is UDP-N-acetylglucosamine 2-epimerase homolog (357 aa).

The protein belongs to the UDP-N-acetylglucosamine 2-epimerase family.

This Methanococcus maripaludis (strain DSM 14266 / JCM 13030 / NBRC 101832 / S2 / LL) protein is UDP-N-acetylglucosamine 2-epimerase homolog.